The primary structure comprises 472 residues: Zinc finger and BTB domain-containing protein 18.2 (472 aa).

In terms of domain architecture, BTB spans 24–91 (CDCTVLVGEA…MYEGKLEFSN (68 aa)). Positions 127-149 (KIIDDGEKDDKPVDSEEHHEHSF) are enriched in basic and acidic residues. 3 disordered regions span residues 127–155 (KIID…SQQK), 197–236 (AGKT…FKPM), and 269–334 (DLLS…LSTS). Low complexity predominate over residues 205–215 (SSPSSPLSQRS). Positions 279 to 288 (AKSPKSQQVG) are enriched in polar residues. Positions 309 to 319 (HTREDDLYQDR) are enriched in basic and acidic residues. 4 consecutive C2H2-type zinc fingers follow at residues 344 to 366 (CICP…LSSH), 384 to 406 (PTCT…ERTH), 412 to 434 (FTCG…AVVH), and 440 to 463 (HACK…RKFH).

Belongs to the krueppel C2H2-type zinc-finger protein family. ZBTB18 subfamily.

The protein localises to the nucleus. Its function is as follows. Transcriptional repressor that plays a role in various developmental processes. Specifically binds the consensus DNA sequence 5'-[AC]ACATCTG[GT][AC]-3' which contains the E box core, and acts by recruiting chromatin remodeling multiprotein complexes. This is Zinc finger and BTB domain-containing protein 18.2 (zbtb18.2) from Xenopus laevis (African clawed frog).